Reading from the N-terminus, the 364-residue chain is Peptide chain release factor 2 (364 aa).

At Gln-251 the chain carries N5-methylglutamine.

This sequence belongs to the prokaryotic/mitochondrial release factor family. In terms of processing, methylated by PrmC. Methylation increases the termination efficiency of RF2.

It localises to the cytoplasm. Peptide chain release factor 2 directs the termination of translation in response to the peptide chain termination codons UGA and UAA. In Campylobacter hominis (strain ATCC BAA-381 / DSM 21671 / CCUG 45161 / LMG 19568 / NCTC 13146 / CH001A), this protein is Peptide chain release factor 2.